Here is a 243-residue protein sequence, read N- to C-terminus: Clathrin light chain A (243 aa).

At Met1 the chain carries Blocked amino end (Met). Disordered regions lie at residues 1–22 (MAEL…GVAG) and 49–87 (ILDG…GPTD). Gly residues predominate over residues 10-20 (PAGGPALGNGV). An involved in binding clathrin heavy chain region spans residues 95–157 (VDRLQSEPES…QLQKTKANNR (63 aa)). A phosphoserine mark is found at Ser100 and Ser201. Lys218 carries the post-translational modification N6-acetyllysine. Ser231 bears the Phosphoserine mark. At Lys237 the chain carries N6-acetyllysine.

It belongs to the clathrin light chain family. As to quaternary structure, clathrin coats are formed from molecules containing 3 heavy chains and 3 light chains. Interacts with CALY; the interaction stimulates clathrin self-assembly and clathrin-mediated endocytosis. Interacts with CKAP5 and TACC3 forming the TACC3/ch-TOG/clathrin complex located at spindle inter-microtubules bridges; the complex implicates clathrin triskelions.

The protein localises to the cytoplasmic vesicle membrane. It localises to the membrane. It is found in the coated pit. Its subcellular location is the cytoplasm. The protein resides in the cytoskeleton. The protein localises to the spindle. Clathrin is the major protein of the polyhedral coat of coated pits and vesicles. Acts as a component of the TACC3/ch-TOG/clathrin complex proposed to contribute to stabilization of kinetochore fibers of the mitotic spindle by acting as inter-microtubule bridge. This chain is Clathrin light chain A (CLTA), found in Bos taurus (Bovine).